The sequence spans 254 residues: Coproheme decarboxylase (254 aa).

Fe-coproporphyrin III contacts are provided by residues arginine 136, 150–154 (YPMDK), histidine 177, glutamine 190, and serine 228. Tyrosine 150 is an active-site residue.

Belongs to the ChdC family. Type 1 subfamily. Fe-coproporphyrin III serves as cofactor.

It catalyses the reaction Fe-coproporphyrin III + 2 H2O2 + 2 H(+) = heme b + 2 CO2 + 4 H2O. It carries out the reaction Fe-coproporphyrin III + H2O2 + H(+) = harderoheme III + CO2 + 2 H2O. The catalysed reaction is harderoheme III + H2O2 + H(+) = heme b + CO2 + 2 H2O. It functions in the pathway porphyrin-containing compound metabolism; protoheme biosynthesis. Its function is as follows. Involved in coproporphyrin-dependent heme b biosynthesis. Catalyzes the decarboxylation of Fe-coproporphyrin III (coproheme) to heme b (protoheme IX), the last step of the pathway. The reaction occurs in a stepwise manner with a three-propionate harderoheme intermediate. This chain is Coproheme decarboxylase, found in Bacillus subtilis (strain 168).